The sequence spans 233 residues: ATP-dependent dethiobiotin synthetase BioD (233 aa).

12–17 (GVGKTI) serves as a coordination point for ATP. A Mg(2+)-binding site is contributed by Thr-16. The active site involves Lys-37. Ser-41 is a substrate binding site. ATP contacts are provided by residues Asp-51, 112 to 115 (EGAG), and 202 to 204 (PKL). Mg(2+) contacts are provided by Asp-51 and Glu-112.

It belongs to the dethiobiotin synthetase family. As to quaternary structure, homodimer. Requires Mg(2+) as cofactor.

Its subcellular location is the cytoplasm. The catalysed reaction is (7R,8S)-7,8-diammoniononanoate + CO2 + ATP = (4R,5S)-dethiobiotin + ADP + phosphate + 3 H(+). Its pathway is cofactor biosynthesis; biotin biosynthesis; biotin from 7,8-diaminononanoate: step 1/2. Functionally, catalyzes a mechanistically unusual reaction, the ATP-dependent insertion of CO2 between the N7 and N8 nitrogen atoms of 7,8-diaminopelargonic acid (DAPA, also called 7,8-diammoniononanoate) to form a ureido ring. This Bacillus velezensis (strain DSM 23117 / BGSC 10A6 / LMG 26770 / FZB42) (Bacillus amyloliquefaciens subsp. plantarum) protein is ATP-dependent dethiobiotin synthetase BioD.